Here is a 242-residue protein sequence, read N- to C-terminus: Glycerol-3-phosphate acyltransferase (242 aa).

The next 6 membrane-spanning stretches (helical) occupy residues 7 to 27 (ISLL…IMFA), 61 to 81 (IAIG…ILLI), 102 to 122 (YYLT…PVYF), 135 to 155 (GFVF…WWTI), 162 to 182 (VSLA…IPWL), and 201 to 221 (DWYI…IIIW).

Belongs to the PlsY family. In terms of assembly, probably interacts with PlsX.

Its subcellular location is the cell membrane. The enzyme catalyses an acyl phosphate + sn-glycerol 3-phosphate = a 1-acyl-sn-glycero-3-phosphate + phosphate. Its pathway is lipid metabolism; phospholipid metabolism. In terms of biological role, catalyzes the transfer of an acyl group from acyl-phosphate (acyl-PO(4)) to glycerol-3-phosphate (G3P) to form lysophosphatidic acid (LPA). This enzyme utilizes acyl-phosphate as fatty acyl donor, but not acyl-CoA or acyl-ACP. This Mycoplasmoides gallisepticum (strain R(low / passage 15 / clone 2)) (Mycoplasma gallisepticum) protein is Glycerol-3-phosphate acyltransferase.